A 78-amino-acid polypeptide reads, in one-letter code: Small ribosomal subunit protein bS18c (78 aa).

It belongs to the bacterial ribosomal protein bS18 family. In terms of assembly, part of the 30S ribosomal subunit.

Its subcellular location is the plastid. It localises to the chloroplast. The protein is Small ribosomal subunit protein bS18c of Oltmannsiellopsis viridis (Marine flagellate).